A 1943-amino-acid polypeptide reads, in one-letter code: Beta-L-arabinobiosidase (1943 aa).

The tat-type signal signal peptide spans 1 to 32 (MHHSTRKRWLASIGAVAAVATLATGGAVTAQA). 2 F5/8 type C domains span residues 892–1049 (TNVD…AYNT) and 1142–1302 (SKEI…AYAI). Positions 1061-1157 (TPQVDAYVSS…HGIPSDGTVN (97 aa)) constitute a PKD domain. FIVAR domains follow at residues 1678 to 1716 (ANGLDASRYTAASWAEFQQIIDAAQAVYDDANATAEQVA), 1746 to 1790 (DAAK…AAVQ), and 1823 to 1864 (QAKK…VDAA). Positions 1875 to 1906 (TKVEQKPGSQQPGVTDTDKDDKDNKGDRVPPT) are disordered. Basic and acidic residues predominate over residues 1890-1902 (DTDKDDKDNKGDR). Residues 1908–1928 (AAVSVVAAAAVLLTAAGVTIL) form a helical membrane-spanning segment.

It belongs to the glycosyl hydrolase 121 family. Post-translationally, predicted to be exported by the Tat system. The position of the signal peptide cleavage has not been experimentally proven.

The protein localises to the membrane. It carries out the reaction 4-O-(beta-L-arabinofuranosyl-(1-&gt;2)-beta-L-arabinofuranosyl-(1-&gt;2)-beta-L-arabinofuranosyl)-(2S,4S)-4-hydroxyproline + H2O = 4-O-(beta-L-arabinofuranosyl)-(2S,4S)-4-hydroxyproline + beta-L-arabinofuranosyl-(1-&gt;2)-beta-L-arabinofuranose. Its function is as follows. Beta-L-arabinobiosidase that removes L-arabinofuranose-beta-1,2-L-arabinofuranose disaccharide from various substrates such as carrot extensin and potato lectin. Also acts on L-arabinofuranose (Ara)-beta-1,2-Ara-beta-1,2-Ara-beta-Hyp (Ara(3)-Hyp) but not on Ara-beta-1,3-Ara-beta-1,2-Ara-beta-1,2-Ara-beta--Hyp (Ara(4)-Hyp) or Ara-beta-1,2-Ara-beta-Hyp (Ara(2)-Hyp), suggesting a specificity for unmodified Ara(3)-Hyp substrate. In the presence of 1-alkanols, shows transglycosylation activity, retaining the anomeric configuration of the arabinofuranose residue. The sequence is that of Beta-L-arabinobiosidase (hypBA2) from Bifidobacterium longum subsp. longum (strain ATCC 15707 / DSM 20219 / JCM 1217 / NCTC 11818 / E194b).